The following is a 475-amino-acid chain: uncharacterized protein (475 aa).

2 4Fe-4S ferredoxin-type domains span residues 303-333 (ASEF…GHGY) and 352-381 (YKDF…LSKL). Positions 312, 315, 318, 322, 362, 365, 368, and 372 each coordinate [4Fe-4S] cluster.

Belongs to the LutB/YkgF family.

This is an uncharacterized protein from Escherichia coli (strain K12).